A 358-amino-acid polypeptide reads, in one-letter code: Leukotriene B4 receptor 2 (358 aa).

Over 1-24 (MSVCYRPPGNETLLSWKGSRATGT) the chain is Extracellular. Asn-10 is a glycosylation site (N-linked (GlcNAc...) asparagine). Residues 25–45 (AFLLLAALLGLPGNGFVVWSL) traverse the membrane as a helical segment. Residues 46 to 60 (AGWRPTAGRPLAATL) are Cytoplasmic-facing. A helical transmembrane segment spans residues 61 to 81 (VLHLALADGAVLLLTPLFVAF). Residues 82-96 (LSRQAWPLGQVGCKA) are Extracellular-facing. A helical membrane pass occupies residues 97–117 (VYYVCALSMYASVLLTGLLSL). Residues 118 to 140 (QRCLAVTRPFLAPRLRSPALARR) lie on the Cytoplasmic side of the membrane. The chain crosses the membrane as a helical span at residues 141–161 (LLLGVWLAALVLAVPAAVYRH). At 162-185 (LWGDRVCQLCHPSAVHAAAHLSLE) the chain is on the extracellular side. Residues 186–206 (TLTAFVLPFGTVLGCYGVTLA) traverse the membrane as a helical segment. Over 207–225 (RLRGARWGSGRQGTRVGRL) the chain is Cytoplasmic. A helical membrane pass occupies residues 226 to 246 (VSAIVLAFGLLWAPYHAVNLL). At 247-275 (QAVAALAPPEGPLARLGGAGQAARAGTTA) the chain is on the extracellular side. Residues 276-296 (LAFFSSSVNPVLYVFTAGDLL) form a helical membrane-spanning segment. The Cytoplasmic portion of the chain corresponds to 297–358 (PRAGPRFLTR…GRMEKDSQEW (62 aa)). The segment at 315–358 (RVGSRSREGTMELRTTPRLKVVGQGRGYGDPGGGGRMEKDSQEW) is disordered. The span at 338-349 (QGRGYGDPGGGG) shows a compositional bias: gly residues.

The protein belongs to the G-protein coupled receptor 1 family.

The protein localises to the cell membrane. Low-affinity receptor for leukotrienes including leukotriene B4. Mediates chemotaxis of granulocytes and macrophages. The response is mediated via G-proteins that activate a phosphatidylinositol-calcium second messenger system. This chain is Leukotriene B4 receptor 2 (Ltb4r2), found in Rattus norvegicus (Rat).